Reading from the N-terminus, the 153-residue chain is Cofilin (153 aa).

Residues 15-147 (GVAVNDSALQ…AYESVLERVS (133 aa)) form the ADF-H domain.

The protein belongs to the actin-binding proteins ADF family.

The protein localises to the cytoplasm. It localises to the cytoskeleton. Its subcellular location is the nucleus matrix. Its function is as follows. Controls reversibly actin polymerization and depolymerization in a pH-sensitive manner. It has the ability to bind G- and F-actin in a 1:1 ratio of cofilin to actin. Binding to F-actin is regulated by tropomyosin. It is the major component of intranuclear and cytoplasmic actin rods. Required for accumulation of actin at the cell division site via depolymerizing actin at the cell ends. In association with myosin II has a role in the assembly of the contractile ring via severing actin filaments. Involved in the maintenance of the contractile ring once formed. In association with profilin and capping protein, has a role in the mitotic reorganization of the actin cytoskeleton. This Yarrowia lipolytica (strain CLIB 122 / E 150) (Yeast) protein is Cofilin (COF1).